A 362-amino-acid polypeptide reads, in one-letter code: MTKRLRAEDDFNPVYPYGYARNQNIPFLTPPFVSSNGFQNFPPGVLSLKLADPITINNQNVSLKVGGGLTLQEETGKLTVNTEPPLHLTNNKLGIALDAPFDVIDNKLTLLAGHGLSIITKETSTLPGLVNTLVVLTGKGIGTDLSNNGGNICVRVGEGGGLSFNDNGDLVAFNKKEDKRTLWTTPDTSPNCRIDQDKDSKLSLVLTKCGSQILANVSLIVVAGRYKIINNNTNPALKGFTIKLLFDKNGVLMESSNLGKSYWNFRNQNSIMSTAYEKAIGFMPNLVAYPKPTTGSKKYARDIVYGNIYLGGKPHQPVTIKTTFNQETGCEYSITFDFSWAKTYVNVEFETTSFTFSYIAQE.

This sequence belongs to the adenoviridae fiber family. Homotrimer. Interacts with host sialic acid. Interacts (via N-terminal tail region) with pentons.

It localises to the virion. The protein resides in the host nucleus. In terms of biological role, forms spikes that protrude from each vertex of the icosahedral capsid. Interacts with host sialic acid to provide virion initial attachment to target cell. Fiber proteins are shed during virus entry, when virus is still at the cell surface. The polypeptide is Fiber protein (Human adenovirus D serotype 8 (HAdV-8)).